Reading from the N-terminus, the 303-residue chain is Aspartate carbamoyltransferase catalytic subunit (303 aa).

Residues arginine 49 and threonine 50 each contribute to the carbamoyl phosphate site. Position 77 (lysine 77) interacts with L-aspartate. 3 residues coordinate carbamoyl phosphate: arginine 99, histidine 126, and glutamine 129. L-aspartate contacts are provided by arginine 159 and arginine 211. Carbamoyl phosphate-binding residues include serine 252 and proline 253.

The protein belongs to the aspartate/ornithine carbamoyltransferase superfamily. ATCase family. In terms of assembly, heterododecamer (2C3:3R2) of six catalytic PyrB chains organized as two trimers (C3), and six regulatory PyrI chains organized as three dimers (R2).

It catalyses the reaction carbamoyl phosphate + L-aspartate = N-carbamoyl-L-aspartate + phosphate + H(+). It functions in the pathway pyrimidine metabolism; UMP biosynthesis via de novo pathway; (S)-dihydroorotate from bicarbonate: step 2/3. Its function is as follows. Catalyzes the condensation of carbamoyl phosphate and aspartate to form carbamoyl aspartate and inorganic phosphate, the committed step in the de novo pyrimidine nucleotide biosynthesis pathway. This Listeria innocua serovar 6a (strain ATCC BAA-680 / CLIP 11262) protein is Aspartate carbamoyltransferase catalytic subunit.